A 151-amino-acid chain; its full sequence is Small heat shock protein HspH (151 aa).

Residues 28-138 enclose the sHSP domain; the sequence is RAGEDNYPPY…KPRRIAINAA (111 aa).

The protein belongs to the small heat shock protein (HSP20) family.

This chain is Small heat shock protein HspH (hspH), found in Bradyrhizobium diazoefficiens (strain JCM 10833 / BCRC 13528 / IAM 13628 / NBRC 14792 / USDA 110).